The chain runs to 249 residues: 2,3-bisphosphoglycerate-dependent phosphoglycerate mutase (249 aa).

Substrate is bound by residues 8-15 (RHGESTWN), 21-22 (TG), arginine 60, 87-90 (ERHY), lysine 98, 114-115 (RR), and 183-184 (GN). Histidine 9 serves as the catalytic Tele-phosphohistidine intermediate. Glutamate 87 serves as the catalytic Proton donor/acceptor.

The protein belongs to the phosphoglycerate mutase family. BPG-dependent PGAM subfamily. In terms of assembly, homodimer.

The enzyme catalyses (2R)-2-phosphoglycerate = (2R)-3-phosphoglycerate. It functions in the pathway carbohydrate degradation; glycolysis; pyruvate from D-glyceraldehyde 3-phosphate: step 3/5. Functionally, catalyzes the interconversion of 2-phosphoglycerate and 3-phosphoglycerate. This Azoarcus sp. (strain BH72) protein is 2,3-bisphosphoglycerate-dependent phosphoglycerate mutase.